The following is a 181-amino-acid chain: ADP-ribosylation factor 1 (181 aa).

Gly-2 is lipidated: N-myristoyl glycine. Residues 24-31 (GLDAAGKT), 67-71 (DVGGQ), and 126-129 (NKQD) each bind GTP.

The protein belongs to the small GTPase superfamily. Arf family.

The protein localises to the golgi apparatus. It catalyses the reaction GTP + H2O = GDP + phosphate + H(+). In terms of biological role, GTP-binding protein involved in protein trafficking; may modulate vesicle budding and uncoating within the Golgi apparatus. The protein is ADP-ribosylation factor 1 (ARF1) of Chlamydomonas reinhardtii (Chlamydomonas smithii).